A 910-amino-acid polypeptide reads, in one-letter code: Chitin synthase A (910 aa).

Residues 56–156 (NYHDDYDPRP…EPAPTPTPAP (101 aa)) form a disordered region. Basic and acidic residues-rich tracts occupy residues 57 to 84 (YHDD…HHDA) and 130 to 148 (DPHD…HDEP). Transmembrane regions (helical) follow at residues 366-386 (WFFQ…IDAG), 448-468 (SAFG…YVAL), 583-603 (VYQT…FLVF), 620-640 (VLFI…FILS), 655-675 (MVYF…FITV), 701-721 (TLII…IIFL), 730-750 (FIQY…YAFC), 828-848 (GVVL…LQAG), and 876-896 (LYSV…FLVV).

This sequence belongs to the chitin synthase family. Class I subfamily.

The protein resides in the cell membrane. It catalyses the reaction [(1-&gt;4)-N-acetyl-beta-D-glucosaminyl](n) + UDP-N-acetyl-alpha-D-glucosamine = [(1-&gt;4)-N-acetyl-beta-D-glucosaminyl](n+1) + UDP + H(+). Functionally, polymerizes chitin, a structural polymer of the cell wall and septum, by transferring the sugar moiety of UDP-GlcNAc to the non-reducing end of the growing chitin polymer. This is Chitin synthase A (CHSA) from Ampelomyces quisqualis (Powdery mildew agent).